We begin with the raw amino-acid sequence, 128 residues long: MAAFMLGSLLRTFKQMVPSSASGQVRSHYVDWRMWRDVKRRKMAYEYADERLRINSLRKNTILPKILQDVADEEIAALPRDSCPVRIRNRCVMTSRPRGVKRRWRLSRIVFRHLADHGQLSGIQRATW.

The protein belongs to the universal ribosomal protein uS14 family. In terms of assembly, component of the mitochondrial small ribosomal subunit (mt-SSU). Mature mammalian 55S mitochondrial ribosomes consist of a small (28S) and a large (39S) subunit. The 28S small subunit contains a 12S ribosomal RNA (12S mt-rRNA) and 30 different proteins. The 39S large subunit contains a 16S rRNA (16S mt-rRNA), a copy of mitochondrial valine transfer RNA (mt-tRNA(Val)), which plays an integral structural role, and 52 different proteins. Interacts with LIAT1.

It localises to the mitochondrion. This is Small ribosomal subunit protein uS14m from Homo sapiens (Human).